A 235-amino-acid polypeptide reads, in one-letter code: MLTLLAILAVSYLIGSIPTGIMAGKMLKGIDIRKFGSGNAGGTNAFRVLGWKTGLTVTLIDIIKGVVAAVSVVAFFRHHPIDVFPDINEVALRLLAGMSAVVGHVFTVFAGFKGGKGVSTAAGMLIGIAPVSMLMVIGIFLLTIYLSRYVSVASMLAAVAFPLIIAIRKYIFELGSGLDYYIKLFGEQLSFHDSLDYHLMIFGLIVALGILYTHRANIRRLLSGTENRVTFGKHS.

6 consecutive transmembrane segments (helical) span residues 4–24, 56–76, 94–114, 124–144, 152–172, and 191–211; these read LLAI…IMAG, TVTL…VAFF, LLAG…GFKG, MLIG…LLTI, VASM…KYIF, and FHDS…LGIL.

The protein belongs to the PlsY family. As to quaternary structure, probably interacts with PlsX.

It is found in the cell inner membrane. It carries out the reaction an acyl phosphate + sn-glycerol 3-phosphate = a 1-acyl-sn-glycero-3-phosphate + phosphate. The protein operates within lipid metabolism; phospholipid metabolism. Its function is as follows. Catalyzes the transfer of an acyl group from acyl-phosphate (acyl-PO(4)) to glycerol-3-phosphate (G3P) to form lysophosphatidic acid (LPA). This enzyme utilizes acyl-phosphate as fatty acyl donor, but not acyl-CoA or acyl-ACP. The polypeptide is Glycerol-3-phosphate acyltransferase (Chlorobium limicola (strain DSM 245 / NBRC 103803 / 6330)).